A 335-amino-acid polypeptide reads, in one-letter code: uncharacterized protein (335 aa).

Residue 28–35 (GPINSGKT) participates in ATP binding.

This sequence belongs to the archaeal ATPase family.

This is an uncharacterized protein from Pyrococcus abyssi (strain GE5 / Orsay).